We begin with the raw amino-acid sequence, 190 residues long: LIM domain-containing protein WLIM1 (190 aa).

A2 is subject to N-acetylalanine. Residues 8–68 (QKCMACDKTV…RPHFDQNFKR (61 aa)) form the LIM zinc-binding 1 domain. The tract at residues 74 to 98 (KSFEGTPKIGKPDRPLEGERPAGTK) is disordered. Residues 83–95 (GKPDRPLEGERPA) show a composition bias toward basic and acidic residues. One can recognise an LIM zinc-binding 2 domain in the interval 108–168 (EKCVGCDKTV…KHHHIQLIKE (61 aa)).

As to quaternary structure, interacts with F-actin. In terms of tissue distribution, expressed in roots, leaves, stems, flowers and siliques. Not detected in pollen.

Its subcellular location is the cytoplasm. The protein localises to the cytoskeleton. In terms of biological role, binds to actin filaments and promotes cross-linking into thick bundles. Has an actin-stabilizing activity. The actin regulatory activities are not regulated by pH and [Ca(2+)]. This Arabidopsis thaliana (Mouse-ear cress) protein is LIM domain-containing protein WLIM1.